Consider the following 543-residue polypeptide: Splicing factor U2af large subunit B (543 aa).

The segment covering Met1–Asp10 has biased composition (gly residues). The segment at Met1–Ser171 is disordered. 2 stretches are compositionally biased toward basic and acidic residues: residues Val17 to Arg78 and Glu88 to Gly114. Residues His115 to Ser126 are compositionally biased toward basic residues. 3 consecutive RRM domains span residues Arg207 to Asp290, Asp327 to Gln405, and Gln446 to Asn532.

Belongs to the splicing factor SR family.

The protein resides in the nucleus. In terms of biological role, necessary for the splicing of pre-mRNA. In Triticum aestivum (Wheat), this protein is Splicing factor U2af large subunit B (U2AF65B).